We begin with the raw amino-acid sequence, 1413 residues long: DNA-directed RNA polymerase subunit beta' (1413 aa).

The Zn(2+) site is built by cysteine 70, cysteine 72, cysteine 85, and cysteine 88. 3 residues coordinate Mg(2+): aspartate 460, aspartate 462, and aspartate 464. Residues cysteine 819, cysteine 893, cysteine 900, and cysteine 903 each contribute to the Zn(2+) site. The disordered stretch occupies residues 1392–1413; sequence EEAFDFGTPSAPAEEPQHPAAE.

The protein belongs to the RNA polymerase beta' chain family. In terms of assembly, the RNAP catalytic core consists of 2 alpha, 1 beta, 1 beta' and 1 omega subunit. When a sigma factor is associated with the core the holoenzyme is formed, which can initiate transcription. Mg(2+) is required as a cofactor. The cofactor is Zn(2+).

It carries out the reaction RNA(n) + a ribonucleoside 5'-triphosphate = RNA(n+1) + diphosphate. Functionally, DNA-dependent RNA polymerase catalyzes the transcription of DNA into RNA using the four ribonucleoside triphosphates as substrates. The polypeptide is DNA-directed RNA polymerase subunit beta' (Burkholderia cenocepacia (strain ATCC BAA-245 / DSM 16553 / LMG 16656 / NCTC 13227 / J2315 / CF5610) (Burkholderia cepacia (strain J2315))).